Consider the following 329-residue polypeptide: Phosphate acyltransferase (329 aa).

It belongs to the PlsX family. In terms of assembly, homodimer. Probably interacts with PlsY.

Its subcellular location is the cytoplasm. It catalyses the reaction a fatty acyl-[ACP] + phosphate = an acyl phosphate + holo-[ACP]. It functions in the pathway lipid metabolism; phospholipid metabolism. Its function is as follows. Catalyzes the reversible formation of acyl-phosphate (acyl-PO(4)) from acyl-[acyl-carrier-protein] (acyl-ACP). This enzyme utilizes acyl-ACP as fatty acyl donor, but not acyl-CoA. The protein is Phosphate acyltransferase of Campylobacter lari (strain RM2100 / D67 / ATCC BAA-1060).